The sequence spans 157 residues: Lipoprotein signal peptidase (157 aa).

4 helical membrane-spanning segments follow: residues 10–30 (FIFIGVFLLIFGTDQAIKYAI), 36–56 (YESSIIDIVLVFNKGVAFSLL), 58–78 (FLEGSLKYLQILLILGLFIFL), and 84–104 (LFKAHTIEFGMVFGAGVSNIL). Residues Asp114 and Asp131 contribute to the active site. Residues 123 to 143 (DFAIFNFADVMIDVGVGVLLI) form a helical membrane-spanning segment.

The protein belongs to the peptidase A8 family.

Its subcellular location is the cell inner membrane. It carries out the reaction Release of signal peptides from bacterial membrane prolipoproteins. Hydrolyzes -Xaa-Yaa-Zaa-|-(S,diacylglyceryl)Cys-, in which Xaa is hydrophobic (preferably Leu), and Yaa (Ala or Ser) and Zaa (Gly or Ala) have small, neutral side chains.. It functions in the pathway protein modification; lipoprotein biosynthesis (signal peptide cleavage). Functionally, this protein specifically catalyzes the removal of signal peptides from prolipoproteins. The protein is Lipoprotein signal peptidase of Helicobacter acinonychis (strain Sheeba).